We begin with the raw amino-acid sequence, 130 residues long: Small ribosomal subunit protein bS16 (130 aa).

Residues 80–130 are disordered; the sequence is AGHTPKKERANMKKAQPGKKAVERAEEKAAKASAAAEAPAEAPAAEAAAEE. Positions 99 to 109 are enriched in basic and acidic residues; the sequence is KAVERAEEKAA. The span at 110 to 130 shows a compositional bias: low complexity; the sequence is KASAAAEAPAEAPAAEAAAEE.

It belongs to the bacterial ribosomal protein bS16 family.

The sequence is that of Small ribosomal subunit protein bS16 from Jannaschia sp. (strain CCS1).